A 135-amino-acid chain; its full sequence is Small ribosomal subunit protein uS11 (135 aa).

Residues 1 to 26 (MPPKSRTAGGARKTRRKEKKNVSHGH) form a disordered region. A compositionally biased stretch (basic residues) spans 12–23 (RKTRRKEKKNVS).

The protein belongs to the universal ribosomal protein uS11 family. As to quaternary structure, part of the 30S ribosomal subunit. Interacts with proteins S7 and S18. Binds to IF-3.

Located on the platform of the 30S subunit, it bridges several disparate RNA helices of the 16S rRNA. Forms part of the Shine-Dalgarno cleft in the 70S ribosome. The protein is Small ribosomal subunit protein uS11 of Beutenbergia cavernae (strain ATCC BAA-8 / DSM 12333 / CCUG 43141 / JCM 11478 / NBRC 16432 / NCIMB 13614 / HKI 0122).